The following is a 346-amino-acid chain: Methylthioribose-1-phosphate isomerase (346 aa).

Substrate-binding positions include 50–52 (RGA), arginine 93, and glutamine 196. The active-site Proton donor is aspartate 237. 247–248 (NK) provides a ligand contact to substrate.

This sequence belongs to the eIF-2B alpha/beta/delta subunits family. MtnA subfamily.

It catalyses the reaction 5-(methylsulfanyl)-alpha-D-ribose 1-phosphate = 5-(methylsulfanyl)-D-ribulose 1-phosphate. It participates in amino-acid biosynthesis; L-methionine biosynthesis via salvage pathway; L-methionine from S-methyl-5-thio-alpha-D-ribose 1-phosphate: step 1/6. In terms of biological role, catalyzes the interconversion of methylthioribose-1-phosphate (MTR-1-P) into methylthioribulose-1-phosphate (MTRu-1-P). In Alkalilimnicola ehrlichii (strain ATCC BAA-1101 / DSM 17681 / MLHE-1), this protein is Methylthioribose-1-phosphate isomerase.